The primary structure comprises 342 residues: tRNA dimethylallyltransferase (342 aa).

Residue G39–T46 participates in ATP binding. Substrate is bound at residue T41–T46. The tract at residues D64–Q67 is interaction with substrate tRNA.

Belongs to the IPP transferase family. As to quaternary structure, monomer. The cofactor is Mg(2+).

The enzyme catalyses adenosine(37) in tRNA + dimethylallyl diphosphate = N(6)-dimethylallyladenosine(37) in tRNA + diphosphate. Functionally, catalyzes the transfer of a dimethylallyl group onto the adenine at position 37 in tRNAs that read codons beginning with uridine, leading to the formation of N6-(dimethylallyl)adenosine (i(6)A). This Chlamydia pneumoniae (Chlamydophila pneumoniae) protein is tRNA dimethylallyltransferase.